Reading from the N-terminus, the 130-residue chain is Fluoride-specific ion channel FluC 2 (130 aa).

Helical transmembrane passes span 4 to 24 (GLSTYKSFFLVAFGAVPGAIC), 38 to 58 (NLWGILLVNSSACLLLGFFLA), 72 to 92 (LYLLLCVGFLGSFSTFSSLIL), and 103 to 123 (WMELFLFTFTSIGLGIIFISL). Na(+) contacts are provided by glycine 82 and serine 85.

The protein belongs to the fluoride channel Fluc/FEX (TC 1.A.43) family.

The protein localises to the cell inner membrane. The catalysed reaction is fluoride(in) = fluoride(out). Its activity is regulated as follows. Na(+) is not transported, but it plays an essential structural role and its presence is essential for fluoride channel function. In terms of biological role, fluoride-specific ion channel. Important for reducing fluoride concentration in the cell, thus reducing its toxicity. This chain is Fluoride-specific ion channel FluC 2, found in Prochlorococcus marinus (strain SARG / CCMP1375 / SS120).